A 363-amino-acid polypeptide reads, in one-letter code: MSKVNRDEILDILEGYSREDITVATLGSHTSLHILNGAKQEGFKTAVVCEKGREVPYQRFRVADEFIMVDKFSDIVNDDVQDELRSMNSIIVPHGSFVAYAGLDHIENDFYVPMFGNRDILRWESERDLERKLMEEAGIRIPFKYTDPEEIDRTVMVKFPGARGGRGYFVASSTEEFNEKIDSMLERGWITEDDVKDAHIEEYIAGTNFCIHYFYSIMNDEVELMGMDSRFESNIDGLVRIPARDQLDINLDPSYVITGNHPVAMRESLLPQAFDMGDRMVEAASKIVPPGMNGPFCLQTMCTDNLEIVTFEMSARTDGGTNTFMHGSTYSYLLHGEGMSMGRRVAREIRVAAEQDRLPEIIT.

Positions 29 and 96 each coordinate 5-amino-1-(5-phospho-beta-D-ribosyl)imidazole-4-carboxamide. In terms of domain architecture, ATP-grasp spans R118–R350. ATP-binding positions include P148–C210 and E232. N260 contributes to the 5-amino-1-(5-phospho-beta-D-ribosyl)imidazole-4-carboxamide binding site. Residues Q299 and E312 each coordinate Mg(2+).

Belongs to the phosphohexose mutase family. Mg(2+) is required as a cofactor. It depends on Mn(2+) as a cofactor.

It carries out the reaction 5-amino-1-(5-phospho-beta-D-ribosyl)imidazole-4-carboxamide + formate + ATP = 5-formamido-1-(5-phospho-D-ribosyl)imidazole-4-carboxamide + ADP + phosphate. It functions in the pathway purine metabolism; IMP biosynthesis via de novo pathway; 5-formamido-1-(5-phospho-D-ribosyl)imidazole-4-carboxamide from 5-amino-1-(5-phospho-D-ribosyl)imidazole-4-carboxamide (formate route): step 1/1. Catalyzes the ATP- and formate-dependent formylation of 5-aminoimidazole-4-carboxamide-1-beta-d-ribofuranosyl 5'-monophosphate (AICAR) to 5-formaminoimidazole-4-carboxamide-1-beta-d-ribofuranosyl 5'-monophosphate (FAICAR) in the absence of folates. This is 5-formaminoimidazole-4-carboxamide-1-(beta)-D-ribofuranosyl 5'-monophosphate synthetase from Methanothermobacter thermautotrophicus (strain ATCC 29096 / DSM 1053 / JCM 10044 / NBRC 100330 / Delta H) (Methanobacterium thermoautotrophicum).